We begin with the raw amino-acid sequence, 548 residues long: Chaperonin GroEL (548 aa).

Residues 30–33, K51, 87–91, G415, 479–481, and D495 each bind ATP; these read TLGP, DGTTT, and NAA.

Belongs to the chaperonin (HSP60) family. Forms a cylinder of 14 subunits composed of two heptameric rings stacked back-to-back. Interacts with the co-chaperonin GroES.

Its subcellular location is the cytoplasm. It carries out the reaction ATP + H2O + a folded polypeptide = ADP + phosphate + an unfolded polypeptide.. Together with its co-chaperonin GroES, plays an essential role in assisting protein folding. The GroEL-GroES system forms a nano-cage that allows encapsulation of the non-native substrate proteins and provides a physical environment optimized to promote and accelerate protein folding. In Nitratidesulfovibrio vulgaris (strain DSM 19637 / Miyazaki F) (Desulfovibrio vulgaris), this protein is Chaperonin GroEL.